A 363-amino-acid polypeptide reads, in one-letter code: MKLYQTLRGIVLVSTGCIFLGMHGGYAAEVPVTSSGYENLLESKEQDPSGLAIHDRILFKVDEENVVTALDVIHKLNLLFYNSYPHLIDSFPARSQYYTAMWPVVLESVIDEFLMVADAKAKRIATDPTAVNQEIEEMFGRDLSPLYAHFEMSPNDIFNVIDRTLTAQRVMGMMVRSKVMLKVTPGKIREYYRKLEEEASRKVIWKYRVLTIKANTESLASQIADKVRARLNEAKTWDKDRLTALVISQGGQLVCSEEFSRENSELSQSHKQELDLIGYPKELCGLPKAHKSGYKLYMLLDKTSGSIEPLDVMESKIKQHLFALEAESVEKQYKDRLRKRYGYDASMIAKLLSEEAPPLFSLL.

Positions 1-27 are cleaved as a signal peptide; that stretch reads MKLYQTLRGIVLVSTGCIFLGMHGGYA.

Belongs to the chlamydial CPn_1058/CT_355/TC_0634 family.

The sequence is that of Protein CPn_1058/CP_0792/CPj1058/CpB1100 from Chlamydia pneumoniae (Chlamydophila pneumoniae).